A 459-amino-acid chain; its full sequence is Serine protease HTRA3 (459 aa).

Residues 1 to 23 (MQARALLPATLAILATLAVLALA) form the signal peptide. The IGFBP N-terminal domain occupies 27 to 90 (PAAPCPARCD…ECVRGVCRCR (64 aa)). Disulfide bonds link cysteine 31/cysteine 54, cysteine 35/cysteine 56, cysteine 40/cysteine 57, cysteine 45/cysteine 60, cysteine 68/cysteine 82, cysteine 76/cysteine 87, cysteine 89/cysteine 107, and cysteine 96/cysteine 132. In terms of domain architecture, Kazal-like spans 76 to 134 (CGDSLECVRGVCRCRWTHTVCGTDGHTYADVCALQAASRRALQVSGTPVRQLQKGACPS). The serine protease stretch occupies residues 181-347 (GSGFIMSEAG…IPSDRITRFL (167 aa)). Residues histidine 197, aspartate 233, and serine 311 each act as charge relay system in the active site. The 86-residue stretch at 365–450 (IRMRTITPSL…EVRRGNDDLL (86 aa)) folds into the PDZ domain.

The protein belongs to the peptidase S1C family. As to quaternary structure, homotrimer. Interacts with MYH9. Interacts with TGFB1; the interaction inhibits TGFB-mediated signaling. Interacts with BMP4; the interaction inhibits BMP4-mediated signaling. Interacts with TGFB2 and GDF5. Highest level of isoform 1 in maternal part of the placenta, moderate level in heart, testis and ovary, low level in muscle and lung. High expression found in granulosa cells of the ovary. Expressed in bone matrix, particularly in articular chondrocytes. Very low level of isoform 2 expressed in placenta. Expressed in the bone matrix, particularly in articular chondrocytes.

Its subcellular location is the secreted. Functionally, serine protease that cleaves beta-casein/CSN2 as well as several extracellular matrix (ECM) proteoglycans such as decorin/DCN, biglycan/BGN and fibronectin/FN1. Inhibits signaling mediated by TGF-beta family proteins possibly indirectly by degradation of these ECM proteoglycans. May act as a tumor suppressor. Negatively regulates, in vitro, trophoblast invasion during placental development and may be involved in the development of the placenta in vivo. May also have a role in ovarian development, granulosa cell differentiation and luteinization. The polypeptide is Serine protease HTRA3 (Htra3) (Mus musculus (Mouse)).